A 416-amino-acid polypeptide reads, in one-letter code: Kynureninase (416 aa).

Pyridoxal 5'-phosphate is bound by residues Thr97, Ser98, 129–132 (FPTD), Thr172, Asp201, His204, and Tyr226. Lys227 is modified (N6-(pyridoxal phosphate)lysine). Pyridoxal 5'-phosphate-binding residues include Trp256 and Thr282.

It belongs to the kynureninase family. In terms of assembly, homodimer. Pyridoxal 5'-phosphate serves as cofactor.

The enzyme catalyses L-kynurenine + H2O = anthranilate + L-alanine + H(+). It catalyses the reaction 3-hydroxy-L-kynurenine + H2O = 3-hydroxyanthranilate + L-alanine + H(+). It functions in the pathway amino-acid degradation; L-kynurenine degradation; L-alanine and anthranilate from L-kynurenine: step 1/1. It participates in cofactor biosynthesis; NAD(+) biosynthesis; quinolinate from L-kynurenine: step 2/3. Functionally, catalyzes the cleavage of L-kynurenine (L-Kyn) and L-3-hydroxykynurenine (L-3OHKyn) into anthranilic acid (AA) and 3-hydroxyanthranilic acid (3-OHAA), respectively. The chain is Kynureninase from Pseudomonas fluorescens.